The following is a 400-amino-acid chain: Enoyl-[acyl-carrier-protein] reductase [NADH] (400 aa).

NAD(+)-binding positions include 48-53 (GASSGY), 74-75 (FE), 111-112 (DA), and 139-140 (LA). Tyr225 lines the substrate pocket. Residue Tyr235 is the Proton donor of the active site. NAD(+) contacts are provided by residues Lys244 and 273–275 (VVT).

This sequence belongs to the TER reductase family. In terms of assembly, monomer.

It catalyses the reaction a 2,3-saturated acyl-[ACP] + NAD(+) = a (2E)-enoyl-[ACP] + NADH + H(+). The protein operates within lipid metabolism; fatty acid biosynthesis. Involved in the final reduction of the elongation cycle of fatty acid synthesis (FAS II). Catalyzes the reduction of a carbon-carbon double bond in an enoyl moiety that is covalently linked to an acyl carrier protein (ACP). This Marinomonas sp. (strain MWYL1) protein is Enoyl-[acyl-carrier-protein] reductase [NADH].